A 106-amino-acid polypeptide reads, in one-letter code: Protein S40-3 (106 aa).

The segment at 1–65 (MSEEFQESEV…TEEEGEMTPP (65 aa)) is disordered. The span at 16 to 41 (SFTRKDNKISHNNENYERKSTEKDKI) shows a compositional bias: basic and acidic residues.

This sequence belongs to the senescence regulator S40 family.

It localises to the nucleus. Its function is as follows. Regulates senescence either by modulating WRKY53 or by activating SAG12. Affects the natural variation of cyst nematodes sex ratio and susceptibility to parasitic nematodes, depending on single nucleotide polymorphism (SNPs) between cultivars. The polypeptide is Protein S40-3 (Arabidopsis thaliana (Mouse-ear cress)).